Consider the following 352-residue polypeptide: uncharacterized protein (352 aa).

The N-terminal 55 residues, 1 to 55 (MAMAALTSSSSAITLLNKPFLPNRSSFFSSDSQSPLLRFSASTSVRSRFPSAAIS), are a transit peptide targeting the chloroplast.

The protein belongs to the methyltransferase superfamily.

It is found in the plastid. The protein localises to the chloroplast. Its subcellular location is the plastoglobule. This is an uncharacterized protein from Arabidopsis thaliana (Mouse-ear cress).